The primary structure comprises 506 residues: Light-independent protochlorophyllide reductase subunit B (506 aa).

[4Fe-4S] cluster is bound at residue Asp36. Asp279 acts as the Proton donor in catalysis. 414–415 (GL) serves as a coordination point for substrate.

It belongs to the ChlB/BchB/BchZ family. Protochlorophyllide reductase is composed of three subunits; BchL, BchN and BchB. Forms a heterotetramer of two BchB and two BchN subunits. [4Fe-4S] cluster is required as a cofactor.

It catalyses the reaction chlorophyllide a + oxidized 2[4Fe-4S]-[ferredoxin] + 2 ADP + 2 phosphate = protochlorophyllide a + reduced 2[4Fe-4S]-[ferredoxin] + 2 ATP + 2 H2O. It participates in porphyrin-containing compound metabolism; bacteriochlorophyll biosynthesis (light-independent). Component of the dark-operative protochlorophyllide reductase (DPOR) that uses Mg-ATP and reduced ferredoxin to reduce ring D of protochlorophyllide (Pchlide) to form chlorophyllide a (Chlide). This reaction is light-independent. The NB-protein (BchN-BchB) is the catalytic component of the complex. The chain is Light-independent protochlorophyllide reductase subunit B from Methylobacterium sp. (strain 4-46).